The primary structure comprises 352 residues: Histidine biosynthesis bifunctional protein HisB (352 aa).

The segment at 1-163 (MKKILFIDRD…MVASAIINDA (163 aa)) is histidinol-phosphatase. The active-site Nucleophile is D8. Residues D8 and D10 each coordinate Mg(2+). D10 functions as the Proton donor in the catalytic mechanism. Zn(2+)-binding residues include C91, H93, C99, and C101. D128 is a binding site for Mg(2+). The tract at residues 164 to 352 (RKASVQRKTK…NYLPSTKGVL (189 aa)) is imidazoleglycerol-phosphate dehydratase.

In the N-terminal section; belongs to the histidinol-phosphatase family. This sequence in the C-terminal section; belongs to the imidazoleglycerol-phosphate dehydratase family. Mg(2+) serves as cofactor. Requires Zn(2+) as cofactor.

Its subcellular location is the cytoplasm. It carries out the reaction D-erythro-1-(imidazol-4-yl)glycerol 3-phosphate = 3-(imidazol-4-yl)-2-oxopropyl phosphate + H2O. The enzyme catalyses L-histidinol phosphate + H2O = L-histidinol + phosphate. The protein operates within amino-acid biosynthesis; L-histidine biosynthesis; L-histidine from 5-phospho-alpha-D-ribose 1-diphosphate: step 6/9. Its pathway is amino-acid biosynthesis; L-histidine biosynthesis; L-histidine from 5-phospho-alpha-D-ribose 1-diphosphate: step 8/9. This Legionella pneumophila subsp. pneumophila (strain Philadelphia 1 / ATCC 33152 / DSM 7513) protein is Histidine biosynthesis bifunctional protein HisB.